The following is a 714-amino-acid chain: Fatty acid oxidation complex subunit alpha (714 aa).

The interval 1–190 is enoyl-CoA hydratase; the sequence is MEMASAFTLN…KLGLVDDVVP (190 aa). The 3-hydroxyacyl-CoA dehydrogenase stretch occupies residues 306-714; it reads APLNSVGILG…FWKTTATDLQ (409 aa).

The protein in the N-terminal section; belongs to the enoyl-CoA hydratase/isomerase family. It in the central section; belongs to the 3-hydroxyacyl-CoA dehydrogenase family. As to quaternary structure, heterotetramer of two alpha chains (FadJ) and two beta chains (FadI).

The protein resides in the cytoplasm. The catalysed reaction is a (3S)-3-hydroxyacyl-CoA = a (2E)-enoyl-CoA + H2O. The enzyme catalyses a 4-saturated-(3S)-3-hydroxyacyl-CoA = a (3E)-enoyl-CoA + H2O. It carries out the reaction a (3S)-3-hydroxyacyl-CoA + NAD(+) = a 3-oxoacyl-CoA + NADH + H(+). It catalyses the reaction (3S)-3-hydroxybutanoyl-CoA = (3R)-3-hydroxybutanoyl-CoA. The protein operates within lipid metabolism; fatty acid beta-oxidation. Functionally, catalyzes the formation of a hydroxyacyl-CoA by addition of water on enoyl-CoA. Also exhibits 3-hydroxyacyl-CoA epimerase and 3-hydroxyacyl-CoA dehydrogenase activities. This chain is Fatty acid oxidation complex subunit alpha, found in Shigella boydii serotype 18 (strain CDC 3083-94 / BS512).